We begin with the raw amino-acid sequence, 100 residues long: UPF0125 protein HD_1828 (100 aa).

This sequence belongs to the UPF0125 (RnfH) family.

This Haemophilus ducreyi (strain 35000HP / ATCC 700724) protein is UPF0125 protein HD_1828.